The primary structure comprises 89 residues: Huwentoxin-IV (89 aa).

An N-terminal signal peptide occupies residues 1-24 (MVNMKASMFLALAGLVLLFVVCYA). Positions 25 to 52 (SESEEKEFSNELLSSVLAVDDNSKGEER) are excised as a propeptide. Glu-53 is modified (pyrrolidone carboxylic acid (Glu); partial). 3 disulfides stabilise this stretch: Cys-54/Cys-69, Cys-61/Cys-76, and Cys-68/Cys-83. Ile-87 is subject to Isoleucine amide.

Belongs to the neurotoxin 10 (Hwtx-1) family. 22 (Htx-4) subfamily. Post-translationally, two forms of huwentoxin-IV exist in the venom of H.schmidti, a non-N-terminally modified (HwTx-IV) and a naturally modified peptide with pyroglutamic acid residue at position 53 (mHwTx-IV). mHwTx-IV shows no observable difference with the unmodified toxin when applied to the TTX-S sodium channel of DRG neuron (IC(50)~50 nM) or when tested on hNav1.7/SCN9A (IC(50)=30.8 nM). In addition, similarly to the unmodified toxin, mHwTx-IV has only a weak affinity for lipid membranes. However, in contrast with HwTx-IV, which dissociates at moderate and high depolarization voltages (50-200 mV), mHwTx-IV inhibition of TTX-sensitive sodium channels is not reversed by strong depolarization voltages. Expressed by the venom gland.

It localises to the secreted. Functionally, this lethal neurotoxin (without cyclization at position 53) inhibits neuronal voltage-gated sodium channel Nav1.2/SCN2A (IC(50)=10-150 nM), rNav1.3/SCN3A (IC(50)=338 nM), Nav1.6/SCN8A (IC(50)=117 nM), and hNav1.7/SCN9A (IC(50)=9.6-33 nM). It inhibits activation of sodium channel by trapping the voltage sensor of domain II (DIIS4) in the closed configuration. The toxin neither shifts the Nav1.7/SCN9A activation curve nor modifies the slope factor. It does not slow fast-inactivation of hNav1.7/SCN9A channels. In addition, it has only a weak affinity for lipid membranes. This toxin also exists with a pyroglutamate at position 53. The sole difference observed between modified (mHwTx-IV) and unmodified toxins is that moderate or high depolarization voltages (200 mV) permit the unmodified toxin to dissociate, whereas mHwTx-IV toxin does not dissociate, even at high depolarization voltages. These data indicate that mHwTx-IV strongly binds to voltage sensor of sodium channel even at extreme depolarization voltages. In Cyriopagopus schmidti (Chinese bird spider), this protein is Huwentoxin-IV.